A 764-amino-acid polypeptide reads, in one-letter code: 5-methyltetrahydropteroyltriglutamate--homocysteine methyltransferase (764 aa).

Residues 16 to 19 (RELK) and K115 contribute to the 5-methyltetrahydropteroyltri-L-glutamate site. L-homocysteine-binding positions include 435 to 437 (IGS) and E488. Residues 435–437 (IGS) and E488 each bind L-methionine. 5-methyltetrahydropteroyltri-L-glutamate-binding positions include 519 to 520 (RC) and W565. D603 lines the L-homocysteine pocket. D603 lines the L-methionine pocket. E609 is a binding site for 5-methyltetrahydropteroyltri-L-glutamate. Residues H645, C647, and E669 each coordinate Zn(2+). H698 serves as the catalytic Proton donor. Zn(2+) is bound at residue C730.

This sequence belongs to the vitamin-B12 independent methionine synthase family. Zn(2+) serves as cofactor.

It carries out the reaction 5-methyltetrahydropteroyltri-L-glutamate + L-homocysteine = tetrahydropteroyltri-L-glutamate + L-methionine. It functions in the pathway amino-acid biosynthesis; L-methionine biosynthesis via de novo pathway; L-methionine from L-homocysteine (MetE route): step 1/1. Its function is as follows. Catalyzes the transfer of a methyl group from 5-methyltetrahydrofolate to homocysteine resulting in methionine formation. The sequence is that of 5-methyltetrahydropteroyltriglutamate--homocysteine methyltransferase from Burkholderia pseudomallei (strain 668).